Consider the following 295-residue polypeptide: Light-independent protochlorophyllide reductase iron-sulfur ATP-binding protein (295 aa).

ATP contacts are provided by residues 39–44 (GIGKST) and K68. A Mg(2+)-binding site is contributed by S43. The [4Fe-4S] cluster site is built by C124 and C158. 209–210 (NR) lines the ATP pocket.

This sequence belongs to the NifH/BchL/ChlL family. As to quaternary structure, homodimer. Protochlorophyllide reductase is composed of three subunits; ChlL, ChlN and ChlB. Requires [4Fe-4S] cluster as cofactor.

It carries out the reaction chlorophyllide a + oxidized 2[4Fe-4S]-[ferredoxin] + 2 ADP + 2 phosphate = protochlorophyllide a + reduced 2[4Fe-4S]-[ferredoxin] + 2 ATP + 2 H2O. Its pathway is porphyrin-containing compound metabolism; chlorophyll biosynthesis (light-independent). Its function is as follows. Component of the dark-operative protochlorophyllide reductase (DPOR) that uses Mg-ATP and reduced ferredoxin to reduce ring D of protochlorophyllide (Pchlide) to form chlorophyllide a (Chlide). This reaction is light-independent. The L component serves as a unique electron donor to the NB-component of the complex, and binds Mg-ATP. The polypeptide is Light-independent protochlorophyllide reductase iron-sulfur ATP-binding protein (Prochlorococcus marinus (strain AS9601)).